The chain runs to 63 residues: Conotoxin Pu5.4 (63 aa).

The first 22 residues, 1 to 22 (MRCVPVFVILLLLIASTPSVDA), serve as a signal peptide directing secretion. A propeptide spanning residues 23-50 (TQKTKDDMSLASFHDNAKRFLQTLRNTR) is cleaved from the precursor. Trp-62 is modified (tryptophan amide).

The protein belongs to the conotoxin T superfamily. Post-translationally, contains 2 disulfide bonds that can be either 'C1-C3, C2-C4' or 'C1-C4, C2-C3', since these disulfide connectivities have been observed for conotoxins with cysteine framework V (for examples, see AC P0DQQ7 and AC P81755). As to expression, expressed by the venom duct.

The protein resides in the secreted. In Conus pulicarius (Flea-bitten cone), this protein is Conotoxin Pu5.4.